We begin with the raw amino-acid sequence, 353 residues long: MKRLIPKHISILKPYQSARRIGIQGRIYLNANESPWINNIQYKFNNLNRYPEFQPYKLLKKYSLYSGVPINQILITRGADEGIEIITRTFCESNIDKIMFFPPTYDMYNVIANIFNIKKIIIPILSNFQLDIKNIKKKINNVKIIYICYPNNPTGNFFSRNKIIRIINSVSKTTLIVIDEAYIDFSIKYSFVSELNNFDNLIILRTLSKSFGLSAIRCGFVLSNVKIIKILKKVLAPYPISIPVSDIAIQSLCSQNIFLMQKNILRILKNKKFLIDQLKKISYIKNIFHSEANFILIKFAESKTIFKYLISKGIIVRDQSHNLGLKNCLRISIGTIHECQELINVLSIYKGKI.

Position 209 is an N6-(pyridoxal phosphate)lysine (Lys-209).

The protein belongs to the class-II pyridoxal-phosphate-dependent aminotransferase family. Histidinol-phosphate aminotransferase subfamily. In terms of assembly, homodimer. It depends on pyridoxal 5'-phosphate as a cofactor.

It catalyses the reaction L-histidinol phosphate + 2-oxoglutarate = 3-(imidazol-4-yl)-2-oxopropyl phosphate + L-glutamate. It participates in amino-acid biosynthesis; L-histidine biosynthesis; L-histidine from 5-phospho-alpha-D-ribose 1-diphosphate: step 7/9. The protein is Histidinol-phosphate aminotransferase of Buchnera aphidicola subsp. Cinara cedri (strain Cc).